A 391-amino-acid chain; its full sequence is MMANNCNLVSVLCVILVLTLFHNPITVAGQNSPVVALFTFGDSNFDAGNKQTLTKTLVAQGFWPYGKSRDDPNGKFSDGLITPDFLAKFMKIPLAIAPALQPNVNVSRGASFAVEGATLLGAPVESMTLNQQVKKFNQMKAANWNDDFVAKSVFMIYIGANDYLNFTKNNPTADASAQQAFVTSVTNKLKNDISALYSSGASKFVIQTLAPLGCLPIVRQEYNTGMDQCYEKLNDLAKQHNEKIGPMLNEMARNSPASAPFQFTVFDFYNAVLTRTQRNQNFRFFVTNASCCGVGSHDAYGCGLPNVHSKLCEYQRSFLFFDGRHNSEKAQEMFAHLLFGADTNVVQPMNVRELTVYPVDEPMREFWVPPTPATVHASDSSSSTSRGYEYY.

The N-terminal stretch at Met-1–Gly-29 is a signal peptide. Ser-43 serves as the catalytic Nucleophile. Residues Asn-105, Asn-165, and Asn-288 are each glycosylated (N-linked (GlcNAc...) asparagine). Catalysis depends on residues Asp-322 and His-325. The disordered stretch occupies residues Pro-372–Tyr-391.

It belongs to the 'GDSL' lipolytic enzyme family. Component of the PYK10 complex, at least composed of PYK10/BGLU23, BGLU21, BGLU22, JAL22, JAL23, PBP1/JAL30, PBP2/JAL31, JAL32, JAL33, JAL34, JAL35, GLL22 and GLL23.

It localises to the secreted. The chain is GDSL esterase/lipase 22 (GLL22) from Arabidopsis thaliana (Mouse-ear cress).